Reading from the N-terminus, the 185-residue chain is Transmembrane protein 140 (185 aa).

The Cytoplasmic segment spans residues 1-11 (MAGPRPRWRDQ). Residues 12 to 32 (LLFMSIIVLVIVVICLMFYAL) traverse the membrane as a helical segment. At 33–77 (LWEAGNLTDLPNLRIGFYNFCLWNEDTSTLQCHQFPELEALGVPR) the chain is on the extracellular side. Asn-38 is a glycosylation site (N-linked (GlcNAc...) asparagine). The chain crosses the membrane as a helical span at residues 78–98 (VGLGLARLGVYGSLVLTLFAP). Residues 99-114 (QPLLLAQCNSDERAWR) are Cytoplasmic-facing. The chain crosses the membrane as a helical span at residues 115–135 (LAVGFLAVSSVLLAGGLGLFL). Residues 136-150 (SYVWKWVRLSLPGPG) are Extracellular-facing. A helical membrane pass occupies residues 151-171 (FLALGSAQALLILLLIAMAVF). The Cytoplasmic segment spans residues 172-185 (PLRAERAESKLESC).

Expression significantly higher in gliomas than in normal brain tissues.

It localises to the membrane. The chain is Transmembrane protein 140 (TMEM140) from Homo sapiens (Human).